The following is a 1839-amino-acid chain: Adenylate cyclase (1839 aa).

Disordered stretches follow at residues 1 to 21, 43 to 87, 126 to 245, 272 to 315, 332 to 388, and 400 to 468; these read MSSPTDAERVNMRREKHPQIE, ITTH…PRFS, TSLL…PIVS, KNTE…QWTA, KRKA…DSND, and ESSG…SFSK. The span at 165–211 shows a compositional bias: polar residues; sequence SQSNESRGTRSSIFFPSTSNSRRGSATSTMTSGSRSSHPPDTPPITS. Over residues 212-221 the composition is skewed to low complexity; it reads QQQEQQYDQQ. Over residues 222–233 the composition is skewed to basic and acidic residues; that stretch reads RQQRPETREQEQ. Residues 332-355 show a composition bias toward basic residues; sequence KRKAKHHHHYHHPQHPRPPHRKHY. The span at 361–376 shows a compositional bias: basic and acidic residues; the sequence is PIEDKAVVEKEQEPPE. Residues 407–428 show a composition bias toward low complexity; sequence SASTQSVSSFSSGATGASGATG. Residues 494 to 574 form the Ras-associating domain; the sequence is RRYAIRIFNI…LNGYLKSDPL (81 aa). 22 LRR repeats span residues 632–655, 659–679, 681–702, 704–726, 727–748, 750–771, 773–794, 795–816, 817–834, 835–856, 858–879, 882–903, 905–926, 928–950, 951–971, 982–1004, 1006–1027, 1028–1048, 1051–1073, 1074–1096, 1103–1124, and 1135–1160; these read TSDIESLDVSNNANIFLPLDFIES, LSSLRMVNIRASKFPANVTDA, KLVSLDLERNFIKKVPDSIFKL, NLTIVNLQCNNLERLPPGFSKLK, NLQLLDISSNKFVNYPEVINSC, NLLQIDLSYNKIHSLPVSINQL, KLAKMNLFNNRLTSVGDLSQMK, NLRTLNLRCNRVTSIECHAPNL, QNLFLTDNRISTFDDDLT, RLRTLELQQNPITSMVCGGNYM, NMTSLSLNKAKLSSFSAELLSK, RLEKLELNENNLTQLPPEINKL, RLIYLSVARNKLESIPDEISDL, SLKSLDLHSNNLRMLMNNLEDLE, LTSLNVSSNLLTGFHGSPAKF, SLLFLSVADNNLTDSIWPLVNTF, NLKTLNLSYNNFVEISDLKLQN, LTELYLSGNNFTSLPGEAVQH, SLKVLMLNGNKLLSLPAELSQLS, RLSVLDVGSNQLKYNISNYHYDW, DLKYLNFSGNKRFEIKSALDPE, and LKQLRVLGLMDVTLKTSKVPDESVSI. Positions 1173–1439 constitute a PPM-type phosphatase domain; that stretch reads RYGVADTLGQ…DNITILCVSL (267 aa). In terms of domain architecture, Guanylate cyclase spans 1483 to 1620; it reads AIVFTDIKNS…PVVNKAARVS (138 aa). Mg(2+)-binding residues include Asp-1488 and Asp-1531.

This sequence belongs to the adenylyl cyclase class-3 family. The cofactor is Mg(2+).

It catalyses the reaction ATP = 3',5'-cyclic AMP + diphosphate. Plays essential roles in regulation of cellular metabolism by catalyzing the synthesis of a second messenger, cAMP. This Lachancea kluyveri (Yeast) protein is Adenylate cyclase (CYR1).